The primary structure comprises 139 residues: Large ribosomal subunit protein uL16 (139 aa).

This sequence belongs to the universal ribosomal protein uL16 family. Part of the 50S ribosomal subunit.

Functionally, binds 23S rRNA and is also seen to make contacts with the A and possibly P site tRNAs. The chain is Large ribosomal subunit protein uL16 from Chlorobium chlorochromatii (strain CaD3).